The chain runs to 93 residues: UPF0521 protein B (93 aa).

Residues 2 to 58 (SLKEVITSLKNDFHSINKEIDSMKENNEKQEEKIFQEIKKLKLEMELLRKDNLSFKT) adopt a coiled-coil conformation.

The protein belongs to the UPF0521 family.

The sequence is that of UPF0521 protein B from Dictyostelium discoideum (Social amoeba).